The chain runs to 327 residues: Autoinducer 2 import system permease protein LsrD (327 aa).

The next 9 membrane-spanning stretches (helical) occupy residues L3–I23, I41–I61, L63–P83, L86–I106, L114–L134, V158–I178, A211–F231, I257–L277, and M283–V303.

This sequence belongs to the binding-protein-dependent transport system permease family. AraH/RbsC subfamily. As to quaternary structure, the complex is composed of two ATP-binding proteins (LsrA), two transmembrane proteins (LsrC and LsrD) and a solute-binding protein (LsrB).

Its subcellular location is the cell inner membrane. Its function is as follows. Part of the ABC transporter complex LsrABCD involved in autoinducer 2 (AI-2) import. Probably responsible for the translocation of the substrate across the membrane. The polypeptide is Autoinducer 2 import system permease protein LsrD (lsrD) (Enterobacter sp. (strain 638)).